Consider the following 113-residue polypeptide: MSKMQNLLAIANEVKEKHANFSISEVNDHCVRLAVFTGEYDWHHHPDSDELFIVLEGELLIDFKDKETAVLKANDSLLIPKGTVHRTRSYVRTVNLCVEHKQAETVIIEEQPC.

A Cupin type-2 domain is found at 41 to 88 (DWHHHPDSDELFIVLEGELLIDFKDKETAVLKANDSLLIPKGTVHRTR).

Belongs to the SchB/CurC family.

This is an uncharacterized protein from Bacillus subtilis (strain 168).